The following is a 405-amino-acid chain: Imidazolonepropionase (405 aa).

Fe(3+) contacts are provided by His72 and His74. Zn(2+) is bound by residues His72 and His74. Residues Arg81, Tyr144, and His177 each contribute to the 4-imidazolone-5-propanoate site. Tyr144 lines the N-formimidoyl-L-glutamate pocket. His242 contacts Fe(3+). A Zn(2+)-binding site is contributed by His242. Gln245 contacts 4-imidazolone-5-propanoate. Position 317 (Asp317) interacts with Fe(3+). Zn(2+) is bound at residue Asp317. Residues Asn319 and Gly321 each contribute to the N-formimidoyl-L-glutamate site. A 4-imidazolone-5-propanoate-binding site is contributed by Thr322.

Belongs to the metallo-dependent hydrolases superfamily. HutI family. It depends on Zn(2+) as a cofactor. Fe(3+) serves as cofactor.

The protein resides in the cytoplasm. It carries out the reaction 4-imidazolone-5-propanoate + H2O = N-formimidoyl-L-glutamate. It functions in the pathway amino-acid degradation; L-histidine degradation into L-glutamate; N-formimidoyl-L-glutamate from L-histidine: step 3/3. Catalyzes the hydrolytic cleavage of the carbon-nitrogen bond in imidazolone-5-propanoate to yield N-formimidoyl-L-glutamate. It is the third step in the universal histidine degradation pathway. The chain is Imidazolonepropionase from Klebsiella pneumoniae (strain 342).